We begin with the raw amino-acid sequence, 195 residues long: MDNQLFFKSLIATLPKWIHKCQTSKHENILYTNPNSLFQLLYFLKYHTNTRFKVLIDICGVDYPSRKRRFEVVYNLLSIDYNTRIRILTSVDEITPICSVVSIFPSAGWWERETWDMFGVYFSNHPDLRRILTDYGFEGHPLRKDFPLSGYVEVRYDDSEKRVVSEPIEMTQEFRYFDFASPWEQMSRSDESNQK.

It belongs to the complex I 30 kDa subunit family. As to quaternary structure, complex I is composed of about 45 different subunits. This is a component of the iron-sulfur (IP) fragment of the enzyme.

The protein resides in the mitochondrion inner membrane. The enzyme catalyses a ubiquinone + NADH + 5 H(+)(in) = a ubiquinol + NAD(+) + 4 H(+)(out). In terms of biological role, core subunit of the mitochondrial membrane respiratory chain NADH dehydrogenase (Complex I) that is believed to belong to the minimal assembly required for catalysis. Complex I functions in the transfer of electrons from NADH to the respiratory chain. The immediate electron acceptor for the enzyme is believed to be ubiquinone. This Marchantia polymorpha (Common liverwort) protein is NADH dehydrogenase [ubiquinone] iron-sulfur protein 3 (NAD9).